The chain runs to 148 residues: Hemoglobin subunit alpha (148 aa).

The residue at position 1 (Ser1) is an N-acetylserine. The region spanning 8 to 148 is the Globin domain; that stretch reads DYSAADRAEL…VCHELSSRYR (141 aa). Position 66 (His66) interacts with O2. His95 serves as a coordination point for heme b.

It belongs to the globin family. As to quaternary structure, heterotetramer of two alpha chains and two beta chains. Red blood cells.

Its function is as follows. Involved in oxygen transport from the lung to the various peripheral tissues. The polypeptide is Hemoglobin subunit alpha (HBA) (Heterodontus portusjacksoni (Port Jackson shark)).